Here is a 388-residue protein sequence, read N- to C-terminus: Venom acid phosphatase Acph-1 (388 aa).

A signal peptide spans 1 to 15 (MSVIAILAMVVGVQA). The Nucleophile role is filled by histidine 26. 2 disulfides stabilise this stretch: cysteine 145–cysteine 355 and cysteine 330–cysteine 334. N-linked (GlcNAc...) asparagine glycans are attached at residues asparagine 182 and asparagine 228. Catalysis depends on glutamate 273, which acts as the Proton donor. N-linked (GlcNAc...) asparagine glycosylation is present at asparagine 366.

It belongs to the histidine acid phosphatase family. Expressed by the venom gland.

The protein localises to the secreted. The enzyme catalyses a phosphate monoester + H2O = an alcohol + phosphate. In Apis mellifera (Honeybee), this protein is Venom acid phosphatase Acph-1.